The primary structure comprises 306 residues: Cathepsin Z (306 aa).

A signal peptide spans 1–20 (MLAILFNFFLLTYFTNITLG). A propeptide spans 21–65 (KVGKSIDLDTRNGYNVHGCYKQTGKIYAHKTYPRQYEAENYNFDD) (activation peptide). Cystine bridges form between Cys-39/Cys-96, Cys-93/Cys-136, Cys-130/Cys-168, Cys-158/Cys-174, and Cys-177/Cys-182. Residue Cys-96 is part of the active site. The N-linked (GlcNAc...) asparagine glycan is linked to Asn-187. A disulfide bond links Cys-217 and Cys-299. Catalysis depends on residues His-243 and Asn-265. Asn-286 carries an N-linked (GlcNAc...) asparagine glycan.

Belongs to the peptidase C1 family.

The protein resides in the cytoplasmic vesicle. Its subcellular location is the secretory vesicle. It is found in the secreted. The enzyme catalyses Release of C-terminal amino acid residues with broad specificity, but lacks action on C-terminal proline. Shows weak endopeptidase activity.. With respect to regulation, the disulfide bridge formed between Cys-39 in the propeptide and the active site residue Cys-96 may prevent activation of the zymogen through formation of a reversible covalent bond with the active site residue. In terms of biological role, exhibits carboxy-monopeptidase as well as carboxy-dipeptidase activity. Plays an essential role in molting, a process during larval stages in which a new cuticle is formed and the old cuticle is shed. Required for the degradation and shedding of the old cuticle. The protein is Cathepsin Z of Onchocerca volvulus.